Reading from the N-terminus, the 382-residue chain is Dodecanoyl-[acyl-carrier-protein] hydrolase, chloroplastic (382 aa).

Residues 1 to 83 (MATTSLASAF…FSAAEKQWTN (83 aa)) constitute a chloroplast transit peptide. Residues Asn-283, His-285, and Cys-320 contribute to the active site.

Belongs to the acyl-ACP thioesterase family. As to quaternary structure, forms homodimers. As to expression, expressed in developing cotyledons. Not detected in leaves.

The protein localises to the plastid. The protein resides in the chloroplast. It catalyses the reaction dodecanoyl-[ACP] + H2O = dodecanoate + holo-[ACP] + H(+). In terms of biological role, plays an essential role in chain termination during de novo fatty acid synthesis. High thioesterase activity for lauroyl-ACP versus other acyl-ACPs. The sequence is that of Dodecanoyl-[acyl-carrier-protein] hydrolase, chloroplastic from Umbellularia californica (California bay laurel).